A 1074-amino-acid polypeptide reads, in one-letter code: Formin-G (1074 aa).

Positions 34–423 (LQMQQGSKTY…DKINEFEKKI (390 aa)) constitute a GBD/FH3 domain. Disordered regions lie at residues 476–507 (QSISPSQDSSNNQKASSSSSNTSTLNDSDIQS) and 549–639 (FTPT…NPSS). Over residues 481-503 (SQDSSNNQKASSSSSNTSTLNDS) the composition is skewed to low complexity. Residues 502-530 (DSDIQSIQSSLKEATLEIERLKLAIEEKM) adopt a coiled-coil conformation. A compositionally biased stretch (polar residues) spans 549 to 561 (FTPTSPDISNDGQ). Residues 568–610 (APPPSPSPPPPISGGGAPPPPPPPPPPPSGGGAPPPPPPPPPS) show a composition bias toward pro residues. One can recognise an FH1 domain in the interval 597–623 (GGGAPPPPPPPPPSGGKKAGAPGAPPT). The FH2 domain occupies 631 to 1031 (NKPVINPSSK…ASGDNGAVQN (401 aa)). The stretch at 914–971 (DINDLEKQFNISKNNCKKVLEANIPSSSKFQSTIGSFLEKTEIDIKNLKENQKNIVDS) forms a coiled coil. The 37-residue stretch at 1037-1073 (GADPLAALANAIKLGQTGLRKRPGPENSSGGSQLNLN) folds into the DAD domain. The disordered stretch occupies residues 1053 to 1074 (TGLRKRPGPENSSGGSQLNLNK). The segment covering 1062–1074 (ENSSGGSQLNLNK) has biased composition (polar residues).

Belongs to the formin homology family. Diaphanous subfamily. Interacts (via GBD/FH3 domain) with activated Rho-GTPases.

In terms of biological role, formins play an important role in the nucleation of actin and the formation of linear actin filaments. This is Formin-G (forG) from Dictyostelium discoideum (Social amoeba).